The following is a 326-amino-acid chain: Malate dehydrogenase (326 aa).

11–17 provides a ligand contact to NAD(+); that stretch reads GAAGQIG. Residues R92 and R98 each coordinate substrate. Residues N105, Q112, and 129–131 each bind NAD(+); that span reads VGN. Substrate contacts are provided by N131 and R162. H187 acts as the Proton acceptor in catalysis.

It belongs to the LDH/MDH superfamily. MDH type 2 family.

The catalysed reaction is (S)-malate + NAD(+) = oxaloacetate + NADH + H(+). Its function is as follows. Catalyzes the reversible oxidation of malate to oxaloacetate. The chain is Malate dehydrogenase from Leptospira interrogans serogroup Icterohaemorrhagiae serovar Lai (strain 56601).